Reading from the N-terminus, the 313-residue chain is tRNA dimethylallyltransferase (313 aa).

17–24 (GPTASGKT) contributes to the ATP binding site. Residue 19–24 (TASGKT) participates in substrate binding. Interaction with substrate tRNA regions lie at residues 42 to 45 (DSAL), 166 to 170 (QRLSR), and 247 to 252 (RCVGYR).

It belongs to the IPP transferase family. Monomer. It depends on Mg(2+) as a cofactor.

It carries out the reaction adenosine(37) in tRNA + dimethylallyl diphosphate = N(6)-dimethylallyladenosine(37) in tRNA + diphosphate. Functionally, catalyzes the transfer of a dimethylallyl group onto the adenine at position 37 in tRNAs that read codons beginning with uridine, leading to the formation of N6-(dimethylallyl)adenosine (i(6)A). The sequence is that of tRNA dimethylallyltransferase from Serratia proteamaculans (strain 568).